The primary structure comprises 107 residues: Nucleoid-associated protein RC1_2305 (107 aa).

It belongs to the YbaB/EbfC family. Homodimer.

The protein resides in the cytoplasm. It is found in the nucleoid. Binds to DNA and alters its conformation. May be involved in regulation of gene expression, nucleoid organization and DNA protection. The protein is Nucleoid-associated protein RC1_2305 of Rhodospirillum centenum (strain ATCC 51521 / SW).